Consider the following 569-residue polypeptide: Proline--tRNA ligase (569 aa).

Belongs to the class-II aminoacyl-tRNA synthetase family. ProS type 1 subfamily. In terms of assembly, homodimer.

Its subcellular location is the cytoplasm. The catalysed reaction is tRNA(Pro) + L-proline + ATP = L-prolyl-tRNA(Pro) + AMP + diphosphate. In terms of biological role, catalyzes the attachment of proline to tRNA(Pro) in a two-step reaction: proline is first activated by ATP to form Pro-AMP and then transferred to the acceptor end of tRNA(Pro). As ProRS can inadvertently accommodate and process non-cognate amino acids such as alanine and cysteine, to avoid such errors it has two additional distinct editing activities against alanine. One activity is designated as 'pretransfer' editing and involves the tRNA(Pro)-independent hydrolysis of activated Ala-AMP. The other activity is designated 'posttransfer' editing and involves deacylation of mischarged Ala-tRNA(Pro). The misacylated Cys-tRNA(Pro) is not edited by ProRS. The polypeptide is Proline--tRNA ligase (Dehalococcoides mccartyi (strain ATCC BAA-2100 / JCM 16839 / KCTC 5957 / BAV1)).